Here is a 98-residue protein sequence, read N- to C-terminus: NADH-ubiquinone oxidoreductase chain 4L (98 aa).

3 helical membrane passes run 1–21, 29–49, and 61–81; these read MSLVYMNIMTAFMVSLAGLLM, SLLCLEGMMLSLFVMATLTIL, and IILLVFAACEAALGLSLLVMV.

This sequence belongs to the complex I subunit 4L family. As to quaternary structure, core subunit of respiratory chain NADH dehydrogenase (Complex I) which is composed of 45 different subunits.

It is found in the mitochondrion inner membrane. It carries out the reaction a ubiquinone + NADH + 5 H(+)(in) = a ubiquinol + NAD(+) + 4 H(+)(out). Its function is as follows. Core subunit of the mitochondrial membrane respiratory chain NADH dehydrogenase (Complex I) which catalyzes electron transfer from NADH through the respiratory chain, using ubiquinone as an electron acceptor. Part of the enzyme membrane arm which is embedded in the lipid bilayer and involved in proton translocation. In Rangifer tarandus (Reindeer), this protein is NADH-ubiquinone oxidoreductase chain 4L (MT-ND4L).